A 145-amino-acid polypeptide reads, in one-letter code: Peptide methionine sulfoxide reductase MsrB (145 aa).

The MsrB domain occupies serine 4 to tyrosine 127. Cysteine 116 functions as the Nucleophile in the catalytic mechanism.

This sequence belongs to the MsrB Met sulfoxide reductase family.

It carries out the reaction L-methionyl-[protein] + [thioredoxin]-disulfide + H2O = L-methionyl-(R)-S-oxide-[protein] + [thioredoxin]-dithiol. The polypeptide is Peptide methionine sulfoxide reductase MsrB (Streptococcus pyogenes serotype M3 (strain ATCC BAA-595 / MGAS315)).